Consider the following 216-residue polypeptide: Peptide methionine sulfoxide reductase MsrA (216 aa).

The active site involves Cys-54.

The protein belongs to the MsrA Met sulfoxide reductase family.

The catalysed reaction is L-methionyl-[protein] + [thioredoxin]-disulfide + H2O = L-methionyl-(S)-S-oxide-[protein] + [thioredoxin]-dithiol. It catalyses the reaction [thioredoxin]-disulfide + L-methionine + H2O = L-methionine (S)-S-oxide + [thioredoxin]-dithiol. Its function is as follows. Has an important function as a repair enzyme for proteins that have been inactivated by oxidation. Catalyzes the reversible oxidation-reduction of methionine sulfoxide in proteins to methionine. The chain is Peptide methionine sulfoxide reductase MsrA from Xanthomonas oryzae pv. oryzae (strain PXO99A).